Here is a 131-residue protein sequence, read N- to C-terminus: Insulin-like 3 (131 aa).

Residues 1–20 form the signal peptide; that stretch reads MDPRLPAWALVLLGPALVFA. 3 disulfide bridges follow: Cys-34/Cys-116, Cys-46/Cys-129, and Cys-115/Cys-120. Positions 58–104 are cleaved as a propeptide — c peptide like; sequence PATGGDRELLQWLERRHLLHGLVADSNLTLGPGLQPLPQTSHHHRHH.

Belongs to the insulin family. In terms of assembly, heterodimer of a B chain and an A chain linked by two disulfide bonds. In terms of tissue distribution, expressed in prenatal and postnatal Leydig cells. Found as well in the corpus luteum, trophoblast, fetal membranes and breast.

The protein resides in the secreted. Its function is as follows. Seems to play a role in testicular function. May be a trophic hormone with a role in testicular descent in fetal life. Is a ligand for LGR8 receptor. This chain is Insulin-like 3 (INSL3), found in Homo sapiens (Human).